A 297-amino-acid polypeptide reads, in one-letter code: MKMKRTVSSNSEAYSYNESPHSPLRFHSPLSDAGDLPESRYVSPEGSPFKIENPKSIVAGNKLTQFSPLPSPIPPPPPQIPPPRRQRNARVPMNSSLDKSPSSMVVQNSWVREDGQQNTTRKAGAPMNGEESATTAVNRARRDDLVSVTALGFRITEVILCVISFSIMAADKTQGWSGDSYDRYKEYRYCLAVNVIAFVYSAFEACDAACYMAKESYMMNCGFHDLFVFSMDQLLAYLLMSASSCAATRVDDWVSNWGKDEFTQMATASIAVSFLAFGAFAVSALISSYRLFTHASS.

The tract at residues 1–136 is disordered; the sequence is MKMKRTVSSN…MNGEESATTA (136 aa). Residues 1–149 lie on the Cytoplasmic side of the membrane; it reads MKMKRTVSSN…ARRDDLVSVT (149 aa). Over residues 8–19 the composition is skewed to low complexity; the sequence is SSNSEAYSYNES. Residues 69–83 are compositionally biased toward pro residues; that stretch reads LPSPIPPPPPQIPPP. Residues 93-121 show a composition bias toward polar residues; sequence MNSSLDKSPSSMVVQNSWVREDGQQNTTR. A helical transmembrane segment spans residues 150–170; it reads ALGFRITEVILCVISFSIMAA. Residues 171-189 lie on the Extracellular side of the membrane; it reads DKTQGWSGDSYDRYKEYRY. The chain crosses the membrane as a helical span at residues 190–210; that stretch reads CLAVNVIAFVYSAFEACDAAC. Topologically, residues 211 to 225 are cytoplasmic; the sequence is YMAKESYMMNCGFHD. A helical transmembrane segment spans residues 226-246; sequence LFVFSMDQLLAYLLMSASSCA. The Extracellular portion of the chain corresponds to 247–265; the sequence is ATRVDDWVSNWGKDEFTQM. The chain crosses the membrane as a helical span at residues 266–286; sequence ATASIAVSFLAFGAFAVSALI. Topologically, residues 287 to 297 are cytoplasmic; sequence SSYRLFTHASS.

It belongs to the Casparian strip membrane proteins (CASP) family. In terms of assembly, homodimer and heterodimers.

The protein localises to the cell membrane. The sequence is that of CASP-like protein 4A2 from Arabidopsis lyrata subsp. lyrata (Lyre-leaved rock-cress).